Consider the following 72-residue polypeptide: Guanine nucleotide-binding protein G(I)/G(S)/G(O) subunit gamma-12 (72 aa).

An N-acetylserine modification is found at S2. A phosphoserine mark is found at S10 and S26. Y42 is modified (phosphotyrosine). S49 carries the phosphoserine modification. The residue at position 69 (C69) is a Cysteine methyl ester. Residue C69 is the site of S-geranylgeranyl cysteine attachment. A propeptide spans 70-72 (IIL) (removed in mature form).

This sequence belongs to the G protein gamma family. As to quaternary structure, g proteins are composed of 3 units, alpha, beta and gamma.

The protein resides in the cell membrane. Guanine nucleotide-binding proteins (G proteins) are involved as a modulator or transducer in various transmembrane signaling systems. The beta and gamma chains are required for the GTPase activity, for replacement of GDP by GTP, and for G protein-effector interaction. The polypeptide is Guanine nucleotide-binding protein G(I)/G(S)/G(O) subunit gamma-12 (Gng12) (Mus musculus (Mouse)).